The chain runs to 1030 residues: Carbamoyl phosphate synthase arginine-specific large chain (1030 aa).

The tract at residues 1–401 (MPKDTSISSI…AIQKAAASLE (401 aa)) is carboxyphosphate synthetic domain. ATP is bound by residues arginine 129, arginine 169, glycine 175, glycine 176, lysine 208, isoleucine 210, glutamate 215, glycine 241, valine 242, histidine 243, glutamine 284, and glutamate 298. In terms of domain architecture, ATP-grasp 1 spans 133–327 (RSLMNELKQP…IAKMAAKLAV (195 aa)). Residues glutamine 284, glutamate 298, and asparagine 300 each contribute to the Mg(2+) site. Mn(2+) contacts are provided by glutamine 284, glutamate 298, and asparagine 300. Positions 402-548 (LKNIGTHLPE…YSTYFGETDG (147 aa)) are oligomerization domain. The tract at residues 549–928 (DISRKEKKRA…ALKKIYTRVW (380 aa)) is carbamoyl phosphate synthetic domain. The ATP-grasp 2 domain maps to 675-863 (YQLLDELGLK…MIPLATRLLA (189 aa)). 10 residues coordinate ATP: arginine 711, glutamine 748, valine 750, glutamate 754, glycine 779, valine 780, histidine 781, serine 782, glutamine 822, and glutamate 834. Glutamine 822, glutamate 834, and asparagine 836 together coordinate Mg(2+). Residues glutamine 822, glutamate 834, and asparagine 836 each coordinate Mn(2+). The region spanning 925-1027 (TRVWSQKGSI…KDLYKKEVAS (103 aa)) is the MGS-like domain. An allosteric domain region spans residues 929-1030 (SQKGSIYLQN…YKKEVASCTQ (102 aa)).

It belongs to the CarB family. Composed of two chains; the small (or glutamine) chain promotes the hydrolysis of glutamine to ammonia, which is used by the large (or ammonia) chain to synthesize carbamoyl phosphate. Tetramer of heterodimers (alpha,beta)4. Mg(2+) is required as a cofactor. The cofactor is Mn(2+).

It carries out the reaction hydrogencarbonate + L-glutamine + 2 ATP + H2O = carbamoyl phosphate + L-glutamate + 2 ADP + phosphate + 2 H(+). The enzyme catalyses hydrogencarbonate + NH4(+) + 2 ATP = carbamoyl phosphate + 2 ADP + phosphate + 2 H(+). The protein operates within amino-acid biosynthesis; L-arginine biosynthesis; carbamoyl phosphate from bicarbonate: step 1/1. Large subunit of the glutamine-dependent carbamoyl phosphate synthetase (CPSase). CPSase catalyzes the formation of carbamoyl phosphate from the ammonia moiety of glutamine, carbonate, and phosphate donated by ATP, constituting the first step of the biosynthetic pathway leading to arginine and/or urea. The large subunit (synthetase) binds the substrates ammonia (free or transferred from glutamine from the small subunit), hydrogencarbonate and ATP and carries out an ATP-coupled ligase reaction, activating hydrogencarbonate by forming carboxy phosphate which reacts with ammonia to form carbamoyl phosphate. In Bacillus subtilis (strain 168), this protein is Carbamoyl phosphate synthase arginine-specific large chain.